The sequence spans 264 residues: MAATGEALTPQGYIQHHLTNLSVGEGFWTWHIDSLLFSVGLGVLFLWIFRSVGKKATTGVPGKLQCFVEMIVEFVDNSVKETFHGRNALIAPLALTIFVWVFMMNFMDMVPVDWLPHTAAMLGVPYLKVVPTTDLNITFSLALGVFLLIIYYSIKVKGVSGFVKELTLQPFNHWAMIPVNLLLESVTLIAKPISLALRLFGNLYAGELIFILIALMYGANWLIASLGVTLQLGWLIFHILVITLQAFIFMMLTIVYLSMAHEDH.

The next 6 helical transmembrane spans lie at 29-49, 87-107, 134-154, 177-197, 208-228, and 235-255; these read TWHI…LWIF, NALI…MNFM, DLNI…YYSI, IPVN…SLAL, LIFI…SLGV, and LIFH…LTIV.

Belongs to the ATPase A chain family. In terms of assembly, F-type ATPases have 2 components, CF(1) - the catalytic core - and CF(0) - the membrane proton channel. CF(1) has five subunits: alpha(3), beta(3), gamma(1), delta(1), epsilon(1). CF(0) has three main subunits: a(1), b(2) and c(9-12). The alpha and beta chains form an alternating ring which encloses part of the gamma chain. CF(1) is attached to CF(0) by a central stalk formed by the gamma and epsilon chains, while a peripheral stalk is formed by the delta and b chains.

The protein resides in the cell inner membrane. Functionally, key component of the proton channel; it plays a direct role in the translocation of protons across the membrane. This is ATP synthase subunit a from Shewanella amazonensis (strain ATCC BAA-1098 / SB2B).